The sequence spans 334 residues: Antho-RFamide neuropeptides (334 aa).

Positions 1–26 are cleaved as a signal peptide; that stretch reads MLVAMTTASYVTILVTLLFHILTINA. Residues 27–116 constitute a propeptide that is removed on maturation; it reads KTVTKRAKET…REFQGRFGRE (90 aa). Composition is skewed to basic and acidic residues over residues 115 to 289 and 303 to 334; these read REQG…RELL and PQTRFRDVQMTRRNVAKKDKIEESNDEEANKS. The disordered stretch occupies residues 115–334; it reads REQGRFGREE…ESNDEEANKS (220 aa). Phe-120 carries the phenylalanine amide modification. A propeptide spanning residues 122 to 125 is cleaved from the precursor; it reads REED. Phe-129 is subject to Phenylalanine amide. Positions 131–134 are excised as a propeptide; sequence REED. Phe-138 is subject to Phenylalanine amide. Positions 140–142 are excised as a propeptide; sequence REE. Residue Phe-146 is modified to Phenylalanine amide. A propeptide spanning residues 148–151 is cleaved from the precursor; the sequence is REED. Phe-155 carries the post-translational modification Phenylalanine amide. A propeptide spanning residues 157 to 160 is cleaved from the precursor; that stretch reads REED. Phe-164 is modified (phenylalanine amide). Positions 166 to 169 are excised as a propeptide; it reads REED. Position 173 is a phenylalanine amide (Phe-173). Residues 175–178 constitute a propeptide that is removed on maturation; it reads REEE. At Phe-182 the chain carries Phenylalanine amide. The propeptide occupies 184-187; the sequence is REED. Position 191 is a phenylalanine amide (Phe-191). A propeptide spanning residues 193-196 is cleaved from the precursor; the sequence is REEE. Phe-200 carries the post-translational modification Phenylalanine amide. Positions 202–205 are excised as a propeptide; it reads REED. The residue at position 209 (Phe-209) is a Phenylalanine amide. A propeptide spanning residues 211 to 214 is cleaved from the precursor; it reads REED. Phe-218 carries the post-translational modification Phenylalanine amide. Positions 220–223 are excised as a propeptide; it reads REEE. Residue Phe-227 is modified to Phenylalanine amide. A propeptide spanning residues 229 to 233 is cleaved from the precursor; that stretch reads KRDED. Phe-237 is modified (phenylalanine amide). The propeptide occupies 239-242; it reads KRED. Phe-246 is modified (phenylalanine amide). Residues 248 to 252 constitute a propeptide that is removed on maturation; the sequence is KRDED. Phe-256 carries the post-translational modification Phenylalanine amide. Positions 258–262 are excised as a propeptide; it reads KRDED. Phe-266 bears the Phenylalanine amide mark. The propeptide occupies 268–271; it reads KRED. Phe-275 carries the post-translational modification Phenylalanine amide. The propeptide occupies 277–280; it reads KRED. Phe-284 bears the Phenylalanine amide mark. Residues 286–334 constitute a propeptide that is removed on maturation; sequence RELLAKLNKRTTSIQEDPQTRFRDVQMTRRNVAKKDKIEESNDEEANKS.

This sequence belongs to the FARP (FMRFamide related peptide) family. Neurons associated with smooth muscle fibers.

The protein localises to the secreted. Not known but it could act as a transmitter at neuromuscular synapses. The protein is Antho-RFamide neuropeptides of Calliactis parasitica (Sea anemone).